Reading from the N-terminus, the 154-residue chain is uncharacterized protein (154 aa).

Positions 104-124 are disordered; sequence NNNNNDNDNNNKEKEDNDEKE. Positions 112–124 are enriched in basic and acidic residues; it reads NNNKEKEDNDEKE.

This is an uncharacterized protein from Dictyostelium discoideum (Social amoeba).